The sequence spans 68 residues: Large ribosomal subunit protein bL35 (68 aa).

This sequence belongs to the bacterial ribosomal protein bL35 family.

In Rickettsia felis (strain ATCC VR-1525 / URRWXCal2) (Rickettsia azadi), this protein is Large ribosomal subunit protein bL35.